A 213-amino-acid chain; its full sequence is Thiopurine S-methyltransferase (213 aa).

Residues W10, L45, E66, and R121 each coordinate S-adenosyl-L-methionine.

Belongs to the class I-like SAM-binding methyltransferase superfamily. TPMT family.

It is found in the cytoplasm. The catalysed reaction is S-adenosyl-L-methionine + a thiopurine = S-adenosyl-L-homocysteine + a thiopurine S-methylether.. This chain is Thiopurine S-methyltransferase, found in Aliivibrio fischeri (strain ATCC 700601 / ES114) (Vibrio fischeri).